The chain runs to 235 residues: Carboxy-S-adenosyl-L-methionine synthase (235 aa).

S-adenosyl-L-methionine contacts are provided by residues Y35, 60-62 (GCS), 84-85 (DN), 110-111 (DI), N125, and R192.

The protein belongs to the class I-like SAM-binding methyltransferase superfamily. Cx-SAM synthase family. As to quaternary structure, homodimer.

It carries out the reaction prephenate + S-adenosyl-L-methionine = carboxy-S-adenosyl-L-methionine + 3-phenylpyruvate + H2O. Catalyzes the conversion of S-adenosyl-L-methionine (SAM) to carboxy-S-adenosyl-L-methionine (Cx-SAM). The protein is Carboxy-S-adenosyl-L-methionine synthase of Sulfurimonas denitrificans (strain ATCC 33889 / DSM 1251) (Thiomicrospira denitrificans (strain ATCC 33889 / DSM 1251)).